A 118-amino-acid polypeptide reads, in one-letter code: uncharacterized protein (118 aa).

Transmembrane regions (helical) follow at residues 20–39 (VEGP…LLWI), 46–63 (LVVV…GEAV), and 67–85 (LSLV…AMSG). A disordered region spans residues 85 to 118 (GDKSKKKGKKQRSILKDADDWDDDSWDDEGDWDE). A compositionally biased stretch (basic residues) spans 88-97 (SKKKGKKQRS). Positions 103-118 (DDWDDDSWDDEGDWDE) are enriched in acidic residues.

The protein resides in the cell membrane. This is an uncharacterized protein from Archaeoglobus fulgidus (strain ATCC 49558 / DSM 4304 / JCM 9628 / NBRC 100126 / VC-16).